The primary structure comprises 301 residues: 2-phosphoglycerate kinase (301 aa).

The ATP-cone domain occupies 2–89; the sequence is IRVIEKGDKV…FWRRFRKMKV (88 aa).

This sequence belongs to the 2-phosphoglycerate kinase family. A divalent metal cation serves as cofactor.

It catalyses the reaction (2R)-2-phosphoglycerate + ATP = (2R)-2,3-bisphosphoglycerate + ADP + H(+). It participates in thermoadapter biosynthesis; cyclic 2,3-diphosphoglycerate biosynthesis; cyclic 2,3-diphosphoglycerate from 2-phospho-D-glycerate: step 1/2. Catalyzes the phosphorylation of 2-phosphoglycerate to 2,3-diphosphoglycerate. Involved in the biosynthesis of cyclic 2,3-bisphosphoglycerate, a thermoprotectant. This is 2-phosphoglycerate kinase from Pyrococcus horikoshii (strain ATCC 700860 / DSM 12428 / JCM 9974 / NBRC 100139 / OT-3).